A 142-amino-acid chain; its full sequence is 3-hydroxyacyl-[acyl-carrier-protein] dehydratase FabZ (142 aa).

Residue His46 is part of the active site.

It belongs to the thioester dehydratase family. FabZ subfamily.

It is found in the cytoplasm. The catalysed reaction is a (3R)-hydroxyacyl-[ACP] = a (2E)-enoyl-[ACP] + H2O. Its function is as follows. Involved in unsaturated fatty acids biosynthesis. Catalyzes the dehydration of short chain beta-hydroxyacyl-ACPs and long chain saturated and unsaturated beta-hydroxyacyl-ACPs. This is 3-hydroxyacyl-[acyl-carrier-protein] dehydratase FabZ from Thermus thermophilus (strain ATCC BAA-163 / DSM 7039 / HB27).